The sequence spans 83 residues: Large ribosomal subunit protein eL43 (83 aa).

Zn(2+) contacts are provided by C38, C41, C56, and C59. The segment at 38 to 59 (CPVCGRKAVKRISTGIWQCQKC) adopts a C4-type zinc-finger fold.

Belongs to the eukaryotic ribosomal protein eL43 family. Putative zinc-binding subfamily. Part of the 50S ribosomal subunit. Zn(2+) is required as a cofactor.

Its function is as follows. Binds to the 23S rRNA. This is Large ribosomal subunit protein eL43 from Pyrococcus furiosus (strain ATCC 43587 / DSM 3638 / JCM 8422 / Vc1).